The primary structure comprises 260 residues: Carbonic anhydrase 2 (260 aa).

Serine 2 is modified (N-acetylserine). Serine 2 bears the Phosphoserine mark. One can recognise an Alpha-carbonic anhydrase domain in the interval 3–259 (HHWGYGKHNG…LKGRQVKASF (257 aa)). Histidine 64 (proton donor/acceptor) is an active-site residue. The Zn(2+) site is built by histidine 94, histidine 96, and histidine 119. A phosphoserine mark is found at serine 165 and serine 172. 198–199 (TT) is a substrate binding site.

The protein belongs to the alpha-carbonic anhydrase family. Interacts with SLC4A4 and SLC26A6. Interaction with SLC4A7 regulates SLC4A7 transporter activity. The cofactor is Zn(2+).

Its subcellular location is the cytoplasm. It localises to the cell membrane. The catalysed reaction is hydrogencarbonate + H(+) = CO2 + H2O. It catalyses the reaction urea = cyanamide + H2O. With respect to regulation, inhibited by acetazolamide. Catalyzes the reversible hydration of carbon dioxide. Can also hydrate cyanamide to urea. Involved in the regulation of fluid secretion into the anterior chamber of the eye. Essential for bone resorption and osteoclast differentiation. Contributes to intracellular pH regulation in the duodenal upper villous epithelium during proton-coupled peptide absorption. Stimulates the chloride-bicarbonate exchange activity of SLC26A6. In Oryctolagus cuniculus (Rabbit), this protein is Carbonic anhydrase 2 (CA2).